Reading from the N-terminus, the 124-residue chain is Large ribosomal subunit protein bL21 (124 aa).

It belongs to the bacterial ribosomal protein bL21 family. Part of the 50S ribosomal subunit. Contacts protein L20.

Functionally, this protein binds to 23S rRNA in the presence of protein L20. This chain is Large ribosomal subunit protein bL21, found in Synechococcus sp. (strain WH7803).